Consider the following 276-residue polypeptide: Polyamine aminopropyltransferase (276 aa).

The PABS domain maps to 3-236; the sequence is ELWYTEKQTK…GLWTFTIGSK (234 aa). Residue Gln-32 coordinates S-methyl-5'-thioadenosine. Spermidine is bound by residues His-63 and Asp-87. S-methyl-5'-thioadenosine is bound by residues Asp-107 and 138-139; that span reads DG. Asp-156 serves as the catalytic Proton acceptor. Spermidine is bound at residue 156 to 159; that stretch reads DSTE. Pro-163 contacts S-methyl-5'-thioadenosine.

This sequence belongs to the spermidine/spermine synthase family. As to quaternary structure, homodimer or homotetramer.

The protein resides in the cytoplasm. It catalyses the reaction S-adenosyl 3-(methylsulfanyl)propylamine + putrescine = S-methyl-5'-thioadenosine + spermidine + H(+). It participates in amine and polyamine biosynthesis; spermidine biosynthesis; spermidine from putrescine: step 1/1. In terms of biological role, involved in the cell growth and proliferation. Catalyzes the irreversible transfer of a propylamine group from the amino donor S-adenosylmethioninamine (decarboxy-AdoMet) to putrescine (1,4-diaminobutane) to yield spermidine. In Bacillus subtilis (strain 168), this protein is Polyamine aminopropyltransferase.